The chain runs to 1169 residues: Chromosome partition protein Smc (1169 aa).

32–39 (PNGCGKSN) serves as a coordination point for ATP. 2 coiled-coil regions span residues 170-265 (ISKY…TGEE) and 307-481 (IRHT…ERLN). Residues 525–620 (DRLGEKIEVA…CASDPAEAAE (96 aa)) enclose the SMC hinge domain. Coiled-coil stretches lie at residues 656 to 914 (ALAR…MKLA) and 985 to 1014 (RYLEEQDRDLTESLATLEQAIEKIDRECRA).

This sequence belongs to the SMC family. Homodimer.

The protein resides in the cytoplasm. Functionally, required for chromosome condensation and partitioning. This chain is Chromosome partition protein Smc, found in Methylococcus capsulatus (strain ATCC 33009 / NCIMB 11132 / Bath).